The following is a 227-amino-acid chain: NAD(P)H-quinone oxidoreductase subunit K, chloroplastic (227 aa).

The [4Fe-4S] cluster site is built by Cys43, Cys44, Cys108, and Cys139.

This sequence belongs to the complex I 20 kDa subunit family. In terms of assembly, NDH is composed of at least 16 different subunits, 5 of which are encoded in the nucleus. It depends on [4Fe-4S] cluster as a cofactor.

Its subcellular location is the plastid. It is found in the chloroplast thylakoid membrane. The catalysed reaction is a plastoquinone + NADH + (n+1) H(+)(in) = a plastoquinol + NAD(+) + n H(+)(out). It carries out the reaction a plastoquinone + NADPH + (n+1) H(+)(in) = a plastoquinol + NADP(+) + n H(+)(out). Its function is as follows. NDH shuttles electrons from NAD(P)H:plastoquinone, via FMN and iron-sulfur (Fe-S) centers, to quinones in the photosynthetic chain and possibly in a chloroplast respiratory chain. The immediate electron acceptor for the enzyme in this species is believed to be plastoquinone. Couples the redox reaction to proton translocation, and thus conserves the redox energy in a proton gradient. This chain is NAD(P)H-quinone oxidoreductase subunit K, chloroplastic, found in Citrus sinensis (Sweet orange).